The following is a 519-amino-acid chain: Steroid 17-alpha-hydroxylase/17,20 lyase (519 aa).

Residue C455 participates in heme binding.

The protein belongs to the cytochrome P450 family. Heme is required as a cofactor.

The protein resides in the membrane. It carries out the reaction a C21-steroid + reduced [NADPH--hemoprotein reductase] + O2 = a 17alpha-hydroxy-C21-steroid + oxidized [NADPH--hemoprotein reductase] + H2O + H(+). It catalyses the reaction 17alpha-hydroxyprogesterone + reduced [NADPH--hemoprotein reductase] + O2 = androst-4-ene-3,17-dione + acetate + oxidized [NADPH--hemoprotein reductase] + H2O + 2 H(+). The catalysed reaction is 17alpha-hydroxypregnenolone + reduced [NADPH--hemoprotein reductase] + O2 = 3beta-hydroxyandrost-5-en-17-one + acetate + oxidized [NADPH--hemoprotein reductase] + H2O + 2 H(+). It functions in the pathway lipid metabolism; steroid biosynthesis. Functionally, conversion of pregnenolone and progesterone to their 17-alpha-hydroxylated products and subsequently to dehydroepiandrosterone (DHEA) and androstenedione. Catalyzes both the 17-alpha-hydroxylation and the 17,20-lyase reaction. In Rana dybowskii (Dybovsky's frog), this protein is Steroid 17-alpha-hydroxylase/17,20 lyase (CYP17A1).